The following is a 78-amino-acid chain: Acyl carrier protein (78 aa).

Residues 2-77 form the Carrier domain; it reads SEIAQKVKSI…QAIAYLEQHV (76 aa). The residue at position 37 (Ser-37) is an O-(pantetheine 4'-phosphoryl)serine.

The protein belongs to the acyl carrier protein (ACP) family. In terms of processing, 4'-phosphopantetheine is transferred from CoA to a specific serine of apo-ACP by AcpS. This modification is essential for activity because fatty acids are bound in thioester linkage to the sulfhydryl of the prosthetic group.

It localises to the cytoplasm. It participates in lipid metabolism; fatty acid biosynthesis. Carrier of the growing fatty acid chain in fatty acid biosynthesis. This is Acyl carrier protein from Cytophaga hutchinsonii (strain ATCC 33406 / DSM 1761 / CIP 103989 / NBRC 15051 / NCIMB 9469 / D465).